We begin with the raw amino-acid sequence, 463 residues long: Phytase A (463 aa).

The signal sequence occupies residues 1-19; the sequence is MAFFTVALSLYYLLSRVST. N-linked (GlcNAc...) asparagine glycosylation is present at N26. Cysteines 29 and 38 form a disulfide. N-linked (GlcNAc...) asparagine glycosylation occurs at N41. 1D-myo-inositol hexakisphosphate is bound by residues Q48, Y49, R79, H80, R83, and T86. Disulfide bonds link C69–C410, C211–C460, C260–C278, and C431–C439. Residue H80 is the Nucleophile of the active site. N103 and N118 each carry an N-linked (GlcNAc...) asparagine glycan. Position 163 (R163) interacts with 1D-myo-inositol hexakisphosphate. N203 carries an N-linked (GlcNAc...) asparagine glycan. D207 contacts 1D-myo-inositol hexakisphosphate. A glycan (N-linked (GlcNAc...) asparagine) is linked at N226. K297 is a binding site for 1D-myo-inositol hexakisphosphate. N-linked (GlcNAc...) asparagine glycans are attached at residues N331 and N335. Residues H357 and D358 each contribute to the 1D-myo-inositol hexakisphosphate site. N-linked (GlcNAc...) asparagine glycosylation occurs at N372.

Belongs to the histidine acid phosphatase family. As to quaternary structure, monomer. In terms of processing, seems to be cleaved into at least two pieces, most likely due to proteases in the supernatant. The N-terminal fragment, called phyB seems to retain phytase activity.

It is found in the secreted. It catalyses the reaction 1D-myo-inositol hexakisphosphate + H2O = 1D-myo-inositol 1,2,4,5,6-pentakisphosphate + phosphate. It carries out the reaction 1D-myo-inositol 1,2,4,5,6-pentakisphosphate + H2O = 1D-myo-inositol 1,2,5,6-tetrakisphosphate + phosphate. The catalysed reaction is 1D-myo-inositol 1,2,5,6-tetrakisphosphate + H2O = 1D-myo-inositol 1,2,6-trisphosphate + phosphate. The enzyme catalyses 1D-myo-inositol 1,2,6-trisphosphate + H2O = 1D-myo-inositol 1,2-bisphosphate + phosphate. It catalyses the reaction 1D-myo-inositol 1,2-bisphosphate + H2O = 1D-myo-inositol 2-phosphate + phosphate. In terms of biological role, catalyzes the phosphate monoester hydrolysis of phytic acid (myo-inositol hexakisphosphate), which results in the stepwise formation of myo-inositol pentakis-, tetrakis-, tris-, bis-, and monophosphates, as well as the liberation of inorganic phosphate. Myo-inositol 2-monophosphate is the end product. Has a broad substrate specificity and is also able to dephosphorylate other classic acid phosphatase substrates such as p-nitrophenyl phosphate, phenyl phosphate, fructose 1,6-bisphosphate, fructose 6-phosphate, glucose 6-phosphate, ribose 5-phosphate, alpha-glycerophosphate, beta-glycerophosphate, 3-phosphoglycerate, as well as ADP and ATP. The sequence is that of Phytase A from Emericella nidulans (strain FGSC A4 / ATCC 38163 / CBS 112.46 / NRRL 194 / M139) (Aspergillus nidulans).